Consider the following 366-residue polypeptide: Cell division protein FtsY homolog, chloroplastic (366 aa).

The transit peptide at 1-40 (MATSSAHLSFLAGRISPFSSERIGLFPLRGEFRPRMTRFR) directs the protein to the chloroplast. GTP is bound by residues 171-178 (GVNGGGKT), 254-258 (DTSGR), and 318-321 (TKLD).

Belongs to the GTP-binding SRP family. As to quaternary structure, monomer. Interacts with FFC/cpSRP54, a component of the cpSRP complex, composed of a FFC/cpSRP54 monomer and a CAO/cpSRP43 dimer. The complex with FFC/cpSRP54 is formed when both proteins are bound with GTP. As to expression, expressed in green tissues. Low levels in roots and seeds.

It localises to the plastid. It is found in the chloroplast stroma. The protein resides in the chloroplast thylakoid membrane. Functionally, signal recognition particle receptor protein. Binds GTP specifically. The GTPase activity is inhibited by the N-terminus of the protein until binding to the thylakoid membrane. Activates the GTPase activity of FFC/cpSRP54 when bound to the cpSRP complex. Required for light-harvesting chlorophyll a/b-binding protein (LHCP) integration into thylakoids. Might be also functionally linked to the Sec translocation machinery. This chain is Cell division protein FtsY homolog, chloroplastic (CPFTSY), found in Arabidopsis thaliana (Mouse-ear cress).